A 79-amino-acid chain; its full sequence is Defensin-like protein 54 (79 aa).

Residues 1 to 27 (MGIKKTSATVFLVIILTISFSYYDVEA) form the signal peptide. 4 cysteine pairs are disulfide-bonded: C39–C76, C43–C67, C52–C74, and C56–C75.

This sequence belongs to the DEFL family.

Its subcellular location is the secreted. The polypeptide is Defensin-like protein 54 (Arabidopsis thaliana (Mouse-ear cress)).